A 178-amino-acid polypeptide reads, in one-letter code: MQNKQNLIWIDLEMTGLDPDTDVIIEMATIITDSELNTLAEGPVIAVHQSDETLAKMDEWNTRQHGGSGLTQRVRESTISMAEAEAQTLEFIKLWVPERSSPICGNSICQDRRFLYRHMPTLENWFHYRNLDVSTLKELAARWSPELKFKKGSTHLALDDIRESIAELRFYREHFIKP.

Residues 7 to 168 (LIWIDLEMTG…DDIRESIAEL (162 aa)) enclose the Exonuclease domain. Residue tyrosine 128 is part of the active site.

This sequence belongs to the oligoribonuclease family.

The protein localises to the cytoplasm. 3'-to-5' exoribonuclease specific for small oligoribonucleotides. This chain is Oligoribonuclease, found in Pseudomonas savastanoi pv. phaseolicola (strain 1448A / Race 6) (Pseudomonas syringae pv. phaseolicola (strain 1448A / Race 6)).